The following is a 497-amino-acid chain: Alkene monooxygenase system, oxygenase component subunit alpha (497 aa).

Fe cation contacts are provided by E104, E134, H137, E197, E231, and H234.

The protein belongs to the TmoA/XamoA family. The alkene monooxygenase multicomponent enzyme system is composed of an electron transfer component and a monooxygenase component interacting with the effector protein XamoD. The electron transfer component is composed of a ferredoxin reductase (XamoF) and a ferredoxin (XamoC), and the monooxygenase component is formed by a heterohexamer (dimer of heterotrimers) of two alpha subunits (XamoA), two beta subunits (XamoE) and two gamma subunits (XamoB). Requires Fe(2+) as cofactor.

Its subcellular location is the cytoplasm. It carries out the reaction propene + NADH + O2 + H(+) = 1,2-epoxypropane + NAD(+) + H2O. Inhibited by propyne. Functionally, component of the alkene monooxygenase multicomponent enzyme system which catalyzes the O2- and NADH-dependent epoxidation of short chain (C2 to C6) alkenes to their corresponding epoxides. Also able to catalyze the oxidation of a number of chlorinated alkenes, including trichloroethylene, cis- and trans-1,2-dichloroethylene, vinyl chloride, 1-chloropropylene, 1,3-dichloropropylene and 2,3-dichloropropylene. This chain is Alkene monooxygenase system, oxygenase component subunit alpha, found in Xanthobacter autotrophicus (strain ATCC BAA-1158 / Py2).